Consider the following 263-residue polypeptide: MQTHIINFAKYSSIKIGAPLEVSLIQTPQDAISALSQNMRIIGKANNLLVSPAAQKLAMLDKHFAYLKDCGNYIEIGGAYSSGRIFSYFKSHNLAGAEFLQALPGSLGGLVKMNAGMKSYEIKQLLQAINVNGKWQDRESFPMNYRDSGIEGVILAARFHKREGFNNALQADFIALRKNHPKEPSCGSCFKNPKGDFAGRLLESVGLKGYCIGDAAFSEKHANFLINKGKATFEDALSLITLAKKRVFEASGIDLECEVQILQ.

Arginine 146 is an active-site residue. Serine 188 functions as the Proton donor in the catalytic mechanism. Residue glutamate 258 is part of the active site.

It belongs to the MurB family. It depends on FAD as a cofactor.

It is found in the cytoplasm. The catalysed reaction is UDP-N-acetyl-alpha-D-muramate + NADP(+) = UDP-N-acetyl-3-O-(1-carboxyvinyl)-alpha-D-glucosamine + NADPH + H(+). The protein operates within cell wall biogenesis; peptidoglycan biosynthesis. Functionally, cell wall formation. This is UDP-N-acetylenolpyruvoylglucosamine reductase from Helicobacter hepaticus (strain ATCC 51449 / 3B1).